Consider the following 197-residue polypeptide: MALKDLFNNFFVVEEEEEVEGPEERESSRSRERVQEREDYNRNENQATPQTFNNKQQAIKSVPQKNTLRSNTTSEERNYRMNNNSKNNSRNVVTMNQASQSYTAQESSKMCLFEPRVFSDTQDIADELKNRRATLVNLQRIDQVSAKRIIDFLSGTVYAIGGDIQRVGTDIFLCTPDNVEVAGSITDHIENMEQHYE.

Residues 15-89 form a disordered region; the sequence is EEEEVEGPEE…RMNNNSKNNS (75 aa). Residues 22 to 42 show a composition bias toward basic and acidic residues; that stretch reads PEERESSRSRERVQEREDYNR. Residues 43–73 show a composition bias toward polar residues; the sequence is NENQATPQTFNNKQQAIKSVPQKNTLRSNTT. The span at 80-89 shows a compositional bias: low complexity; the sequence is RMNNNSKNNS.

The protein belongs to the SepF family. In terms of assembly, homodimer. Interacts with FtsZ.

The protein localises to the cytoplasm. In terms of biological role, cell division protein that is part of the divisome complex and is recruited early to the Z-ring. Probably stimulates Z-ring formation, perhaps through the cross-linking of FtsZ protofilaments. Its function overlaps with FtsA. This chain is Cell division protein SepF, found in Staphylococcus epidermidis (strain ATCC 35984 / DSM 28319 / BCRC 17069 / CCUG 31568 / BM 3577 / RP62A).